The chain runs to 463 residues: Peptidase inhibitor 16 (463 aa).

An N-terminal signal peptide occupies residues 1–27 (MHGSCSFLMLLLPLLLLLVATTGPVGA). The SCP domain occupies 37-165 (VELHNLYRAQ…TNIELLVCNY (129 aa)). N-linked (GlcNAc...) asparagine glycosylation occurs at Asn114. Disordered regions lie at residues 262–281 (TQAP…TEAP), 303–341 (EPVT…DPKM), and 383–408 (LQAT…SATA). Over residues 318 to 327 (SADKVTDKTK) the composition is skewed to basic and acidic residues. Residues 386-395 (TLDHTGHTSS) are O-glycosylated at one site. Positions 392-408 (HTSSKSLPNFPNTSATA) are enriched in polar residues. 2 N-linked (GlcNAc...) asparagine glycosylation sites follow: Asn403 and Asn409.

The protein belongs to the CRISP family. Interacts with PSP94/MSMB. N- and O-glycosylated. O-glycosylated with core 1 or possibly core 8 glycans. Expressed in prostate, testis, ovary and intestine. Concentrates in prostate cancer patient's sera.

The protein resides in the secreted. May inhibit cardiomyocyte growth. The chain is Peptidase inhibitor 16 (PI16) from Homo sapiens (Human).